The primary structure comprises 613 residues: Dihydroxy-acid dehydratase (613 aa).

Position 81 (Asp81) interacts with Mg(2+). [2Fe-2S] cluster is bound at residue Cys122. Asp123 and Lys124 together coordinate Mg(2+). Lys124 carries the post-translational modification N6-carboxylysine. Cys193 contacts [2Fe-2S] cluster. Position 489 (Glu489) interacts with Mg(2+). The Proton acceptor role is filled by Ser515.

Belongs to the IlvD/Edd family. In terms of assembly, homodimer. Requires [2Fe-2S] cluster as cofactor. Mg(2+) serves as cofactor.

It carries out the reaction (2R)-2,3-dihydroxy-3-methylbutanoate = 3-methyl-2-oxobutanoate + H2O. It catalyses the reaction (2R,3R)-2,3-dihydroxy-3-methylpentanoate = (S)-3-methyl-2-oxopentanoate + H2O. Its pathway is amino-acid biosynthesis; L-isoleucine biosynthesis; L-isoleucine from 2-oxobutanoate: step 3/4. It participates in amino-acid biosynthesis; L-valine biosynthesis; L-valine from pyruvate: step 3/4. Functionally, functions in the biosynthesis of branched-chain amino acids. Catalyzes the dehydration of (2R,3R)-2,3-dihydroxy-3-methylpentanoate (2,3-dihydroxy-3-methylvalerate) into 2-oxo-3-methylpentanoate (2-oxo-3-methylvalerate) and of (2R)-2,3-dihydroxy-3-methylbutanoate (2,3-dihydroxyisovalerate) into 2-oxo-3-methylbutanoate (2-oxoisovalerate), the penultimate precursor to L-isoleucine and L-valine, respectively. In Pseudomonas putida (strain GB-1), this protein is Dihydroxy-acid dehydratase.